The following is a 148-amino-acid chain: Deoxyuridine 5'-triphosphate nucleotidohydrolase (148 aa).

Residues 67–69, Asn-80, 84–86, and Met-94 each bind substrate; these read RSG and LID.

This sequence belongs to the dUTPase family. Mg(2+) is required as a cofactor.

It catalyses the reaction dUTP + H2O = dUMP + diphosphate + H(+). The protein operates within pyrimidine metabolism; dUMP biosynthesis; dUMP from dCTP (dUTP route): step 2/2. This enzyme is involved in nucleotide metabolism: it produces dUMP, the immediate precursor of thymidine nucleotides and it decreases the intracellular concentration of dUTP so that uracil cannot be incorporated into DNA. The polypeptide is Deoxyuridine 5'-triphosphate nucleotidohydrolase (Paraburkholderia phymatum (strain DSM 17167 / CIP 108236 / LMG 21445 / STM815) (Burkholderia phymatum)).